The following is a 664-amino-acid chain: MGRANGKRRNHRKNRMNPIQKKGFLEQEIPLNNSEAALPLLSRLDNPEIKERSWACSAISNIIASCTEGRLYLLKNGLVSKLIDRISDDSVEVVVEATGALRNLAIEEGYSICMDMYRKNVLAPLQIWQTKIVQTLDEATEGKNVLETYEDRSTFSCLCAIAENISSLLVNLGETTSQVIKVLNQKNTLVFLSRLLIPEAKIPQSVQEMALQAFFTLTDDNDDGIITWIQNSSDFALKTINQIYLYFSYPSCLVRVYSIGIIYNIYQSGFVNKKMESVVKGISLFDSFIPEALPILSDLLPSEENYRNLVRQVYDKDTYFKTKKDDLTLSSELLVIPATLELISSMTSLLQSLADGTDELEEQEDSLMEDEDLSYMDDMSNVVNEDENLIIDEIPSNTPQKGNFKLVEYMLDHVLPKVITYCVVAFEFSSEEIPSNLSNYFQEVGDRTIECLNNISWSCNSVFVESSEAFTRWKLSAGKILQWIFQTIFLRLGLGVWPFSSEGFTTACSLLWSVSKPFPAEIQVLSVDDISTLILFSSTHGSLEAQSRLLGAFGSLGRCGNIQINQLLGQTLMSCVIASDPNPLLAVEALNAIFDVYGDKSYPYDAPVFKGSGYLSQLSEALPRLKNMVKKIDRRREKHLRFRAEEALENLESFIDYKHAEYAS.

The stretch at 77–119 is one ARM repeat; sequence GLVSKLIDRISDDSVEVVVEATGALRNLAIEEGYSICMDMYRK.

This sequence belongs to the nuclear import and ribosome assembly adapter family. In terms of assembly, forms a heterotrimeric complex with rpl5 and rpl11a or rpl11b; interaction of this complex with kap104 allows the nuclear import of the heterotrimer. Component of a hexameric 5S RNP precursor complex; this complex acts as a precursor for ribosome assembly.

It localises to the cytoplasm. The protein resides in the nucleus. Functionally, nuclear import adapter that specifically recruits the two functionally and topologically linked ribosomal proteins rpl5 and rpl11 (encoded by rpl11a and rpl11b). Guarantees that this cargo pair remains bound together from the time of synthesis in the cytoplasm until delivery to the nascent 5S rRNA in the nucleus. This is Armadillo repeat protein involved in nucleocytoplasmic transport Syo2 from Schizosaccharomyces pombe (strain 972 / ATCC 24843) (Fission yeast).